We begin with the raw amino-acid sequence, 96 residues long: Sec-independent protein translocase protein TatA (96 aa).

The chain crosses the membrane as a helical span at residues 1–21 (MGFSSIWHWIIVLVVVLLLFG). Residues 42-96 (GMADDEDDEAASVSAERRGIEDGKPAQTIYPPQQPQQPQQPPQQPPVHRDDAPRG) are disordered. The span at 56–65 (AERRGIEDGK) shows a compositional bias: basic and acidic residues. Residues 73-86 (PQQPQQPQQPPQQP) are compositionally biased toward pro residues.

The protein belongs to the TatA/E family. As to quaternary structure, the Tat system comprises two distinct complexes: a TatABC complex, containing multiple copies of TatA, TatB and TatC subunits, and a separate TatA complex, containing only TatA subunits. Substrates initially bind to the TatABC complex, which probably triggers association of the separate TatA complex to form the active translocon.

The protein localises to the cell inner membrane. Part of the twin-arginine translocation (Tat) system that transports large folded proteins containing a characteristic twin-arginine motif in their signal peptide across membranes. TatA could form the protein-conducting channel of the Tat system. This Rhodospirillum rubrum (strain ATCC 11170 / ATH 1.1.1 / DSM 467 / LMG 4362 / NCIMB 8255 / S1) protein is Sec-independent protein translocase protein TatA.